Reading from the N-terminus, the 377-residue chain is Erythronate-4-phosphate dehydrogenase (377 aa).

Positions 45 and 67 each coordinate substrate. Residues 127–128 (QV), D147, and T176 contribute to the NAD(+) site. Residue R209 is part of the active site. NAD(+) is bound at residue D233. Residue E238 is part of the active site. H255 functions as the Proton donor in the catalytic mechanism. G258 lines the NAD(+) pocket. Y259 contributes to the substrate binding site.

This sequence belongs to the D-isomer specific 2-hydroxyacid dehydrogenase family. PdxB subfamily. Homodimer.

Its subcellular location is the cytoplasm. The catalysed reaction is 4-phospho-D-erythronate + NAD(+) = (R)-3-hydroxy-2-oxo-4-phosphooxybutanoate + NADH + H(+). It functions in the pathway cofactor biosynthesis; pyridoxine 5'-phosphate biosynthesis; pyridoxine 5'-phosphate from D-erythrose 4-phosphate: step 2/5. Its function is as follows. Catalyzes the oxidation of erythronate-4-phosphate to 3-hydroxy-2-oxo-4-phosphonooxybutanoate. The protein is Erythronate-4-phosphate dehydrogenase of Vibrio vulnificus (strain YJ016).